We begin with the raw amino-acid sequence, 270 residues long: tRNA pseudouridine synthase A (270 aa).

Asp-51 acts as the Nucleophile in catalysis. Tyr-109 contacts substrate.

Belongs to the tRNA pseudouridine synthase TruA family. As to quaternary structure, homodimer.

It catalyses the reaction uridine(38/39/40) in tRNA = pseudouridine(38/39/40) in tRNA. In terms of biological role, formation of pseudouridine at positions 38, 39 and 40 in the anticodon stem and loop of transfer RNAs. The polypeptide is tRNA pseudouridine synthase A (Burkholderia thailandensis (strain ATCC 700388 / DSM 13276 / CCUG 48851 / CIP 106301 / E264)).